The primary structure comprises 1201 residues: Peroxisomal ATPase PEX6 (1201 aa).

The interval L247 to N300 is disordered. The segment covering N250–N280 has biased composition (low complexity). Residues E284–E297 are compositionally biased toward acidic residues. G959–T966 contributes to the ATP binding site.

The protein belongs to the AAA ATPase family. As to quaternary structure, interacts with PEX1; forming the PEX1-PEX6 AAA ATPase complex, which is composed of a heterohexamer formed by a trimer of PEX1-PEX6 dimers.

Its subcellular location is the cytoplasm. It localises to the cytosol. The protein localises to the peroxisome membrane. It carries out the reaction ATP + H2O = ADP + phosphate + H(+). Its function is as follows. Component of the PEX1-PEX6 AAA ATPase complex, a protein dislocase complex that mediates the ATP-dependent extraction of the PEX5 receptor from peroxisomal membranes, an essential step for PEX5 recycling. Specifically recognizes PEX5 monoubiquitinated at 'Cys-11', and pulls it out of the peroxisome lumen through the PEX2-PEX10-PEX12 retrotranslocation channel. Extraction by the PEX1-PEX6 AAA ATPase complex is accompanied by unfolding of the TPR repeats and release of bound cargo from PEX5. The protein is Peroxisomal ATPase PEX6 (pex6) of Dictyostelium discoideum (Social amoeba).